Reading from the N-terminus, the 315-residue chain is Glycine--tRNA ligase alpha subunit (315 aa).

The protein belongs to the class-II aminoacyl-tRNA synthetase family. In terms of assembly, tetramer of two alpha and two beta subunits.

The protein localises to the cytoplasm. The catalysed reaction is tRNA(Gly) + glycine + ATP = glycyl-tRNA(Gly) + AMP + diphosphate. This chain is Glycine--tRNA ligase alpha subunit, found in Pseudomonas entomophila (strain L48).